The primary structure comprises 194 residues: Anthranilate synthase component 2 (194 aa).

The Glutamine amidotransferase type-1 domain occupies 2–194 (KIFFIDNFDS…QSVGFLRELS (193 aa)). An L-glutamine-binding site is contributed by 57–59 (GPG). The Nucleophile; for GATase activity role is filled by Cys84. L-glutamine contacts are provided by residues Gln88 and 134-135 (SL). Residues His170 and Glu172 each act as for GATase activity in the active site.

Heterotetramer consisting of two non-identical subunits: a beta subunit (TrpG) and a large alpha subunit (TrpE).

The enzyme catalyses chorismate + L-glutamine = anthranilate + pyruvate + L-glutamate + H(+). It functions in the pathway amino-acid biosynthesis; L-tryptophan biosynthesis; L-tryptophan from chorismate: step 1/5. In terms of biological role, part of a heterotetrameric complex that catalyzes the two-step biosynthesis of anthranilate, an intermediate in the biosynthesis of L-tryptophan. In the first step, the glutamine-binding beta subunit (TrpG) of anthranilate synthase (AS) provides the glutamine amidotransferase activity which generates ammonia as a substrate that, along with chorismate, is used in the second step, catalyzed by the large alpha subunit of AS (TrpE) to produce anthranilate. In the absence of TrpG, TrpE can synthesize anthranilate directly from chorismate and high concentrations of ammonia. The protein is Anthranilate synthase component 2 (trpG) of Helicobacter pylori (strain J99 / ATCC 700824) (Campylobacter pylori J99).